A 150-amino-acid polypeptide reads, in one-letter code: Cytosine deaminase (150 aa).

The 119-residue stretch at 3 to 121 folds into the CMP/dCMP-type deaminase domain; the sequence is FDDKKGLQVA…KLLIENGVEV (119 aa). Residue Asn-44 participates in substrate binding. His-55 serves as a coordination point for Zn(2+). Glu-57 acts as the Proton donor in catalysis. Positions 84 and 87 each coordinate Zn(2+). Asp-147 serves as a coordination point for substrate.

It belongs to the cytidine and deoxycytidylate deaminase family. Homodimer. Requires Zn(2+) as cofactor.

The protein localises to the cytoplasm. Its subcellular location is the nucleus. The enzyme catalyses cytosine + H2O + H(+) = uracil + NH4(+). The protein operates within pyrimidine metabolism; UMP biosynthesis via salvage pathway; uracil from cytosine: step 1/1. Its function is as follows. Catalyzes the hydrolytic deamination of cytosine to uracil or 5-methylcytosine to thymine. Is involved in the pyrimidine salvage pathway, which allows the cell to utilize cytosine for pyrimidine nucleotide synthesis. This Candida albicans (strain SC5314 / ATCC MYA-2876) (Yeast) protein is Cytosine deaminase.